A 116-amino-acid polypeptide reads, in one-letter code: NADH-ubiquinone oxidoreductase chain 3 (116 aa).

A run of 3 helical transmembrane segments spans residues 3-23 (LITTIIAITITLSAVLATISF), 56-76 (FFLIAILFLLFDLEIALLLPL), and 85-105 (PALTLAWSAAVLALLTLGLIY).

This sequence belongs to the complex I subunit 3 family.

It is found in the mitochondrion membrane. It carries out the reaction a ubiquinone + NADH + 5 H(+)(in) = a ubiquinol + NAD(+) + 4 H(+)(out). Functionally, core subunit of the mitochondrial membrane respiratory chain NADH dehydrogenase (Complex I) that is believed to belong to the minimal assembly required for catalysis. Complex I functions in the transfer of electrons from NADH to the respiratory chain. The immediate electron acceptor for the enzyme is believed to be ubiquinone. In Salmo salar (Atlantic salmon), this protein is NADH-ubiquinone oxidoreductase chain 3 (MT-ND3).